Here is a 100-residue protein sequence, read N- to C-terminus: Aspartyl/glutamyl-tRNA(Asn/Gln) amidotransferase subunit C (100 aa).

This sequence belongs to the GatC family. Heterotrimer of A, B and C subunits.

The catalysed reaction is L-glutamyl-tRNA(Gln) + L-glutamine + ATP + H2O = L-glutaminyl-tRNA(Gln) + L-glutamate + ADP + phosphate + H(+). It carries out the reaction L-aspartyl-tRNA(Asn) + L-glutamine + ATP + H2O = L-asparaginyl-tRNA(Asn) + L-glutamate + ADP + phosphate + 2 H(+). Functionally, allows the formation of correctly charged Asn-tRNA(Asn) or Gln-tRNA(Gln) through the transamidation of misacylated Asp-tRNA(Asn) or Glu-tRNA(Gln) in organisms which lack either or both of asparaginyl-tRNA or glutaminyl-tRNA synthetases. The reaction takes place in the presence of glutamine and ATP through an activated phospho-Asp-tRNA(Asn) or phospho-Glu-tRNA(Gln). This Erythrobacter litoralis (strain HTCC2594) protein is Aspartyl/glutamyl-tRNA(Asn/Gln) amidotransferase subunit C.